A 642-amino-acid polypeptide reads, in one-letter code: 4-hydroxy-3-methylbut-2-enyl diphosphate reductase (642 aa).

The interval 1 to 282 is 4-hydroxy-3-methylbut-2-enyl diphosphate reductase; it reads MRKVMLAEKA…EEAISKMSEN (282 aa). Residue Cys13 participates in [4Fe-4S] cluster binding. The (2E)-4-hydroxy-3-methylbut-2-enyl diphosphate site is built by His42 and His77. His42 and His77 together coordinate dimethylallyl diphosphate. Residues His42 and His77 each contribute to the isopentenyl diphosphate site. Cys99 provides a ligand contact to [4Fe-4S] cluster. Residue His127 coordinates (2E)-4-hydroxy-3-methylbut-2-enyl diphosphate. His127 contributes to the dimethylallyl diphosphate binding site. His127 provides a ligand contact to isopentenyl diphosphate. Glu129 serves as the catalytic Proton donor. Position 165 (Thr165) interacts with (2E)-4-hydroxy-3-methylbut-2-enyl diphosphate. Cys193 contributes to the [4Fe-4S] cluster binding site. Residues Ser221, Ser222, Asn223, and Ser266 each contribute to the (2E)-4-hydroxy-3-methylbut-2-enyl diphosphate site. The dimethylallyl diphosphate site is built by Ser221, Ser222, Asn223, and Ser266. Residues Ser221, Ser222, Asn223, and Ser266 each contribute to the isopentenyl diphosphate site. 3 S1 motif domains span residues 309 to 377, 484 to 552, and 569 to 638; these read GASV…LSVK, GQVV…LSVK, and GSVV…LSIR.

The protein in the N-terminal section; belongs to the IspH family. Requires [4Fe-4S] cluster as cofactor.

The catalysed reaction is isopentenyl diphosphate + 2 oxidized [2Fe-2S]-[ferredoxin] + H2O = (2E)-4-hydroxy-3-methylbut-2-enyl diphosphate + 2 reduced [2Fe-2S]-[ferredoxin] + 2 H(+). It catalyses the reaction dimethylallyl diphosphate + 2 oxidized [2Fe-2S]-[ferredoxin] + H2O = (2E)-4-hydroxy-3-methylbut-2-enyl diphosphate + 2 reduced [2Fe-2S]-[ferredoxin] + 2 H(+). The protein operates within isoprenoid biosynthesis; dimethylallyl diphosphate biosynthesis; dimethylallyl diphosphate from (2E)-4-hydroxy-3-methylbutenyl diphosphate: step 1/1. Its pathway is isoprenoid biosynthesis; isopentenyl diphosphate biosynthesis via DXP pathway; isopentenyl diphosphate from 1-deoxy-D-xylulose 5-phosphate: step 6/6. Its function is as follows. Catalyzes the conversion of 1-hydroxy-2-methyl-2-(E)-butenyl 4-diphosphate (HMBPP) into a mixture of isopentenyl diphosphate (IPP) and dimethylallyl diphosphate (DMAPP). Acts in the terminal step of the DOXP/MEP pathway for isoprenoid precursor biosynthesis. This Clostridium acetobutylicum (strain ATCC 824 / DSM 792 / JCM 1419 / IAM 19013 / LMG 5710 / NBRC 13948 / NRRL B-527 / VKM B-1787 / 2291 / W) protein is 4-hydroxy-3-methylbut-2-enyl diphosphate reductase.